Here is a 288-residue protein sequence, read N- to C-terminus: Bifunctional protein FolD (288 aa).

Residues 171-173 (GRS), S196, and T237 contribute to the NADP(+) site.

Belongs to the tetrahydrofolate dehydrogenase/cyclohydrolase family. As to quaternary structure, homodimer.

It catalyses the reaction (6R)-5,10-methylene-5,6,7,8-tetrahydrofolate + NADP(+) = (6R)-5,10-methenyltetrahydrofolate + NADPH. The catalysed reaction is (6R)-5,10-methenyltetrahydrofolate + H2O = (6R)-10-formyltetrahydrofolate + H(+). It participates in one-carbon metabolism; tetrahydrofolate interconversion. Its function is as follows. Catalyzes the oxidation of 5,10-methylenetetrahydrofolate to 5,10-methenyltetrahydrofolate and then the hydrolysis of 5,10-methenyltetrahydrofolate to 10-formyltetrahydrofolate. The polypeptide is Bifunctional protein FolD (Elusimicrobium minutum (strain Pei191)).